The chain runs to 532 residues: Collagen alpha-1(XXIII) chain (532 aa).

Over 1-23 the chain is Cytoplasmic; the sequence is MGAGERAAGGGGTQDPGAGCGAR. The helical; Signal-anchor for type II membrane protein transmembrane segment at 24–45 threads the bilayer; it reads ALGALCLLLSVGSATACLLLGA. Topologically, residues 46-532 are extracellular; sequence QAAALHGRVA…GLPVPGCWHK (487 aa). Residues 102–532 form a disordered region; that stretch reads PSECICPPGP…GLPVPGCWHK (431 aa). Collagen-like domains are found at residues 108-163, 173-232, 242-297, and 313-372; these read PPGP…FGPR, GPPG…PGKK, GLPG…EQGD, and GPPG…MGLS. Composition is skewed to low complexity over residues 129–145 and 157–172; these read QSGR…DGKP and PGDF…DGAA. Composition is skewed to pro residues over residues 174 to 184, 241 to 250, and 314 to 326; these read PPGPPGPPGAR, PGLPGPPGPK, and PPGP…PPGI. Basic and acidic residues-rich tracts occupy residues 342–354 and 380–393; these read DGEK…KGDP and PKGE…DHLQ. The segment covering 403–414 has biased composition (pro residues); sequence PGPPGPPGPPGP. Collagen-like domains follow at residues 404–452 and 455–514; these read GPPG…GPPG and GLPG…PGLD. 2 stretches are compositionally biased toward basic and acidic residues: residues 427-441 and 478-495; these read DGAK…ERGP and RGEK…ERGV.

Homotrimer. Undergoes proteolytic cleavage by furin protease to yield a 60 kDa soluble form that forms a homotrimer and exhibits a low affinity interaction with heparin.

It localises to the cell membrane. In Rattus norvegicus (Rat), this protein is Collagen alpha-1(XXIII) chain (Col23a1).